We begin with the raw amino-acid sequence, 308 residues long: Eugenol synthase 1 (308 aa).

NADP(+) is bound by residues 13–16 (TGYI), 35–45 (VRESTVSDPAK), Arg36, 86–88 (QMQ), 111–113 (SEF), Lys133, and 153–155 (NCF). Lys133 (proton donor/acceptor) is an active-site residue.

It belongs to the NmrA-type oxidoreductase family. In flowers, mostly expressed in limbs, and, to a lower extent, in tubes.

It carries out the reaction eugenol + a carboxylate + NADP(+) = a coniferyl ester + NADPH. The catalysed reaction is eugenol + acetate + NADP(+) = (E)-coniferyl acetate + NADPH. It participates in aromatic compound metabolism; phenylpropanoid biosynthesis. Functionally, involved in the biosynthesis of the floral volatile eugenol. Catalyzes the synthesis of the phenylpropene eugenol from coniferyl acetate. Phenylpropenes are produced by plants as defense compounds with antimicrobial and antianimal properties, or as floral attractants of pollinators. The polypeptide is Eugenol synthase 1 (Petunia hybrida (Petunia)).